We begin with the raw amino-acid sequence, 271 residues long: Formamidopyrimidine-DNA glycosylase (271 aa).

Residue proline 2 is the Schiff-base intermediate with DNA of the active site. Catalysis depends on glutamate 3, which acts as the Proton donor. Lysine 58 serves as the catalytic Proton donor; for beta-elimination activity. Positions 92, 111, and 152 each coordinate DNA. Residues 237 to 271 (YVYGKVQKPCKICNNIITLIRQNGRSTYFCNACQN) form an FPG-type zinc finger. Arginine 261 acts as the Proton donor; for delta-elimination activity in catalysis.

This sequence belongs to the FPG family. As to quaternary structure, monomer. Requires Zn(2+) as cofactor.

It carries out the reaction Hydrolysis of DNA containing ring-opened 7-methylguanine residues, releasing 2,6-diamino-4-hydroxy-5-(N-methyl)formamidopyrimidine.. The catalysed reaction is 2'-deoxyribonucleotide-(2'-deoxyribose 5'-phosphate)-2'-deoxyribonucleotide-DNA = a 3'-end 2'-deoxyribonucleotide-(2,3-dehydro-2,3-deoxyribose 5'-phosphate)-DNA + a 5'-end 5'-phospho-2'-deoxyribonucleoside-DNA + H(+). Its function is as follows. Involved in base excision repair of DNA damaged by oxidation or by mutagenic agents. Acts as a DNA glycosylase that recognizes and removes damaged bases. Has a preference for oxidized purines, such as 7,8-dihydro-8-oxoguanine (8-oxoG). Has AP (apurinic/apyrimidinic) lyase activity and introduces nicks in the DNA strand. Cleaves the DNA backbone by beta-delta elimination to generate a single-strand break at the site of the removed base with both 3'- and 5'-phosphates. The polypeptide is Formamidopyrimidine-DNA glycosylase (Wolbachia pipientis wMel).